A 183-amino-acid polypeptide reads, in one-letter code: Large ribosomal subunit protein bL32m (183 aa).

4 residues coordinate Zn(2+): Cys99, Cys102, Cys112, and Cys115.

It belongs to the bacterial ribosomal protein bL32 family. In terms of assembly, component of the mitochondrial large ribosomal subunit (mt-LSU).

Its subcellular location is the mitochondrion. In terms of biological role, component of the mitochondrial large ribosomal subunit (mt-LSU). The mitochondrial ribosome (mitoribosome) is a large ribonucleoprotein complex responsible for the synthesis of proteins inside mitochondria. The chain is Large ribosomal subunit protein bL32m (mrpl-32) from Caenorhabditis elegans.